We begin with the raw amino-acid sequence, 130 residues long: MAQIPSSRTNGSGAQMRVFGLHVYGNFYECANTELLKSPEELEKVVLEAAREGGMTVLDIKSWKIGEGVSVVAIILESHITVHTWPEYRFATVDVYSCGGHTNPHRAFEVLAEALKPARVEKGVAERHLE.

Serine 78 functions as the Schiff-base intermediate with substrate; via pyruvic acid in the catalytic mechanism. A Pyruvic acid (Ser); by autocatalysis modification is found at serine 78. The active-site Proton acceptor; for processing activity is the histidine 83. The Proton donor; for catalytic activity role is filled by cysteine 98.

Belongs to the prokaryotic AdoMetDC family. Type 1 subfamily. In terms of assembly, heterotetramer of two alpha and two beta chains arranged as a dimer of alpha/beta heterodimers. It depends on pyruvate as a cofactor. Post-translationally, is synthesized initially as an inactive proenzyme. Formation of the active enzyme involves a self-maturation process in which the active site pyruvoyl group is generated from an internal serine residue via an autocatalytic post-translational modification. Two non-identical subunits are generated from the proenzyme in this reaction, and the pyruvate is formed at the N-terminus of the alpha chain, which is derived from the carboxyl end of the proenzyme. The post-translation cleavage follows an unusual pathway, termed non-hydrolytic serinolysis, in which the side chain hydroxyl group of the serine supplies its oxygen atom to form the C-terminus of the beta chain, while the remainder of the serine residue undergoes an oxidative deamination to produce ammonia and the pyruvoyl group blocking the N-terminus of the alpha chain.

It catalyses the reaction S-adenosyl-L-methionine + H(+) = S-adenosyl 3-(methylsulfanyl)propylamine + CO2. It participates in amine and polyamine biosynthesis; S-adenosylmethioninamine biosynthesis; S-adenosylmethioninamine from S-adenosyl-L-methionine: step 1/1. In terms of biological role, catalyzes the decarboxylation of S-adenosylmethionine to S-adenosylmethioninamine (dcAdoMet), the propylamine donor required for the synthesis of the polyamines spermine and spermidine from the diamine putrescine. In Aeropyrum pernix (strain ATCC 700893 / DSM 11879 / JCM 9820 / NBRC 100138 / K1), this protein is S-adenosylmethionine decarboxylase proenzyme.